A 202-amino-acid polypeptide reads, in one-letter code: Prephenate decarboxylase (202 aa).

This sequence belongs to the prephenate decarboxylase family.

The catalysed reaction is prephenate + H(+) = 3-[(4R)-4-hydroxycyclohexa-1,5-dien-1-yl]-2-oxopropanoate + CO2. In terms of biological role, in vivo, involved in the biosynthesis of 2-carboxy-6-hydroxyoctahydroindole (Choi) present in the nonribosomal glycopeptides aeruginoside 126A and B. AerD is an unusual prephenate decarboxylase that avoids the typical aromatization of the cyclohexadienol ring of prephenate. AerD catalyzes the protonation at C8 followed by decarboxylation to produce the dihydro-4-hydroxyphenylpyruvate regioisomer A258 (H2HPP A258)(3-(4-hydroxycyclohexa- 1,5-dienyl)-2-oxopropanoic acid), which is able to undergo a nonenzymatic isomerization to produce dihydro-4-hydroxyphenylpyruvate regioisomer A295 (H2HPP A295)(3-(4-hydroxycyclohex-2-enylidene)-2-oxopropanoic acid). The protein is Prephenate decarboxylase of Planktothrix agardhii (strain NIVA-CYA 126/8).